A 251-amino-acid chain; its full sequence is 5'-nucleotidase SurE (251 aa).

The a divalent metal cation site is built by D8, D9, S39, and N95.

The protein belongs to the SurE nucleotidase family. A divalent metal cation is required as a cofactor.

The protein resides in the cytoplasm. The catalysed reaction is a ribonucleoside 5'-phosphate + H2O = a ribonucleoside + phosphate. Functionally, nucleotidase that shows phosphatase activity on nucleoside 5'-monophosphates. In Ralstonia nicotianae (strain ATCC BAA-1114 / GMI1000) (Ralstonia solanacearum), this protein is 5'-nucleotidase SurE.